The following is a 568-amino-acid chain: Lipoprotein LpqB (568 aa).

An N-terminal signal peptide occupies residues methionine 1–glycine 23. Residue cysteine 24 is the site of N-palmitoyl cysteine attachment. Residue cysteine 24 is the site of S-diacylglycerol cysteine attachment.

This sequence belongs to the LpqB lipoprotein family.

It localises to the cell membrane. The polypeptide is Lipoprotein LpqB (Corynebacterium glutamicum (strain R)).